A 1379-amino-acid polypeptide reads, in one-letter code: Attractin-like protein 1 (1379 aa).

The interval 1 to 23 is disordered; it reads METGGRARTGTPQPAAPGVWRAR. Positions 1–52 are cleaved as a signal peptide; sequence METGGRARTGTPQPAAPGVWRARPAGGGGGGASSWLLDGNSWLLCYGFLYLA. The EGF-like 1 domain maps to 53–91; that stretch reads LYAQVSQSKPCERTGSCFSGRCVNSTCLCDPGWVGDQCQ. The Extracellular portion of the chain corresponds to 53 to 1230; the sequence is LYAQVSQSKP…FSQHNTIMDL (1178 aa). Cystine bridges form between Cys63/Cys79, Cys81/Cys90, and Cys93/Cys119. N-linked (GlcNAc...) asparagine glycosylation is present at Asn76. The CUB domain maps to 93–209; sequence CQGRFKLTEP…TGFNIFYSIN (117 aa). 2 N-linked (GlcNAc...) asparagine glycosylation sites follow: Asn174 and Asn198. Positions 207-245 constitute an EGF-like 2 domain; it reads SINSCPNNCSGHGKCTTSVSVPSQVYCECDKYWKGEACD. Intrachain disulfides connect Cys211–Cys221, Cys215–Cys233, and Cys235–Cys244. 6 Kelch repeats span residues 316 to 365, 367 to 415, 427 to 475, 480 to 531, 533 to 591, and 592 to 638; these read FMWV…LYQE, IFMY…EGHS, VMII…SVYD, SIYV…LING, MLIF…VING, and SMYI…WNKN. Residue Asn380 is glycosylated (N-linked (GlcNAc...) asparagine). PSI domains lie at 614–657, 666–709, and 715–760; these read NCKA…AKCP, RCYR…TKCH, and ICNK…DACL. Positions 755–873 constitute a C-type lectin domain; that stretch reads IGDACLRVNS…TSMANGLVCE (119 aa). N-linked (GlcNAc...) asparagine glycans are attached at residues Asn763, Asn778, and Asn898. The cysteines at positions 776 and 872 are disulfide-linked. 2 consecutive PSI domains span residues 889 to 939 and 942 to 1012; these read PCSL…ATCS and NCSG…IQCP. Cystine bridges form between Cys1014/Cys1022, Cys1016/Cys1028, Cys1031/Cys1040, Cys1043/Cys1057, Cys1060/Cys1069, Cys1062/Cys1076, Cys1078/Cys1088, and Cys1091/Cys1106. Laminin EGF-like domains lie at 1014–1059 and 1060–1108; these read CQCN…QCTA and CTCS…TCYY. An N-linked (GlcNAc...) asparagine glycan is attached at Asn1157. Residues 1231-1251 traverse the membrane as a helical segment; it reads VQFFVTFFSCFLSLLLVAAVV. Over 1252-1379 the chain is Cytoplasmic; sequence WKIKQTCWAS…HLSTRQGTCV (128 aa). The disordered stretch occupies residues 1354–1379; it reads KASDSKDKTSGVRNRKHLSTRQGTCV.

As to quaternary structure, interacts with MC4R.

It is found in the membrane. In terms of biological role, may play a role in melanocortin signaling pathways that regulate energy homeostasis. The protein is Attractin-like protein 1 (ATRNL1) of Homo sapiens (Human).